We begin with the raw amino-acid sequence, 79 residues long: Hematopoietic cell signal transducer (79 aa).

The N-terminal stretch at 1 to 17 is a signal peptide; it reads MDPPGYLLFLLLLPVAA. Over 18–35 the chain is Extracellular; it reads SQTSAGSCSGCGTLSLPL. A helical membrane pass occupies residues 36-56; that stretch reads LAGLVAADAVMSLLIVGVVFV. Topologically, residues 57-79 are cytoplasmic; it reads CMRPHGRPAQEDGRVYINMPGRG. Tyr-72 carries the phosphotyrosine modification. Positions 72–74 are GRB2 binding site; that stretch reads YIN. The segment at 72–75 is PIK3R1 binding site; the sequence is YINM.

The protein belongs to the DAP10 family. As to quaternary structure, homodimer; Disulfide-linked. Interacts with KLRK1 to form a stable complex, which results in surface expression of both proteins, whereas alone, it is minimally expressed. Interacts with PIK3R1 and GRB2. Interacts with CLEC5A. Forms an CLEC5A/TYROBP/HCST trimolecular complex depending almost solely on TYROBP. Heterohexamer composed of four subunits of HCST/DAP10 and two subunits of KLRK1. Interacts (via transmembrane domain) with KLRK1 isoform 1 (via transmembrane domain); the interaction is required for KLRK1 cell surface expression on naive NK cells and activated CD8(+) T-cells, but is dispensable on activated TYROBP-expressing NK cells. Interacts (via transmembrane domain) with KLRK1 isoform 2 (via transmembrane domain); the interaction is required for KLRK1 NK cell surface expression and induces NK cell-mediated cytotoxicity. Interacts with CD300H. Post-translationally, phosphorylated; PIK3R1 and GRB2 associate specifically with tyrosine-phosphorylated HCST. O-glycosylated.

The protein resides in the membrane. Transmembrane adapter protein which associates with KLRK1 to form an activation receptor KLRK1-HCST in lymphoid and myeloid cells; this receptor plays a major role in triggering cytotoxicity against target cells expressing cell surface ligands such as MHC class I chain-related MICA and MICB, and UL16-binding proteins (ULBPs); these ligands are up-regulated by stress conditions and pathological state such as viral infection and tumor transformation. Functions as a docking site for PI3-kinase PIK3R1 and GRB2. Interaction of ULBPs with KLRK1-HCST triggers calcium mobilization and activation of the PIK3R1, MAP2K/ERK, and JAK2/STAT5 signaling pathways. Both PIK3R1 and GRB2 are required for full KLRK1-HCST-mediated activation and ultimate killing of target cells. In NK cells, KLRK1-HCST signaling directly induces cytotoxicity and enhances cytokine production initiated via DAP12/TYROBP-associated receptors. In T-cells, it provides primarily costimulation for TCR-induced signals. KLRK1-HCST receptor plays a role in immune surveillance against tumors and is required for cytolysis of tumors cells; indeed, melanoma cells that do not express KLRK1 ligands escape from immune surveillance mediated by NK cells. This is Hematopoietic cell signal transducer (Hcst) from Mus musculus (Mouse).